The following is a 481-amino-acid chain: Cytochrome c oxidase subunit 1 (481 aa).

A helical membrane pass occupies residues 22–42; it reads ISYLWLAYWFGMIGFYMSVLI. Residues E45 and G50 each contribute to the Ca(2+) site. 8 helical membrane-spanning segments follow: residues 64–84, 109–129, 151–171, 194–214, 240–260, 278–298, 309–329, and 343–363; these read LLFT…GLFG, SLLF…LEIG, FIIF…VNFI, IVLT…VFLM, LFWF…FGII, MILA…TSYV, YFTT…FNWV, and LVLF…TGVV. Position 69 (H69) interacts with Fe(II)-heme a. H246 lines the Cu cation pocket. The segment at residues 246–250 is a cross-link (1'-histidyl-3'-tyrosine (His-Tyr)); the sequence is HPEVY. Y250 contributes to the O2 binding site. Mg(2+) is bound by residues H374 and D375. H382 lines the heme a3 pocket. 2 consecutive transmembrane segments (helical) span residues 382–402 and 420–440; these read HFHF…IIYI and IAPI…FTGF. Fe(II)-heme a is bound at residue H384. Ca(2+) is bound at residue P448. The chain crosses the membrane as a helical span at residues 459 to 479; it reads FICTLGATMMLVLKLAILFII.

Belongs to the heme-copper respiratory oxidase family. As to quaternary structure, component of the cytochrome c oxidase (complex IV, CIV), a multisubunit enzyme composed of a catalytic core of 3 subunits and several supernumerary subunits. The complex exists as a monomer or a dimer and forms supercomplexes (SCs) in the inner mitochondrial membrane with ubiquinol-cytochrome c oxidoreductase (cytochrome b-c1 complex, complex III, CIII). Heme is required as a cofactor. It depends on Cu cation as a cofactor.

It is found in the mitochondrion inner membrane. It catalyses the reaction 4 Fe(II)-[cytochrome c] + O2 + 8 H(+)(in) = 4 Fe(III)-[cytochrome c] + 2 H2O + 4 H(+)(out). It functions in the pathway energy metabolism; oxidative phosphorylation. Functionally, component of the cytochrome c oxidase, the last enzyme in the mitochondrial electron transport chain which drives oxidative phosphorylation. The respiratory chain contains 3 multisubunit complexes succinate dehydrogenase (complex II, CII), ubiquinol-cytochrome c oxidoreductase (cytochrome b-c1 complex, complex III, CIII) and cytochrome c oxidase (complex IV, CIV), that cooperate to transfer electrons derived from NADH and succinate to molecular oxygen, creating an electrochemical gradient over the inner membrane that drives transmembrane transport and the ATP synthase. Cytochrome c oxidase is the component of the respiratory chain that catalyzes the reduction of oxygen to water. Electrons originating from reduced cytochrome c in the intermembrane space (IMS) are transferred via the dinuclear copper A center (CU(A)) of subunit 2 and heme A of subunit 1 to the active site in subunit 1, a binuclear center (BNC) formed by heme A3 and copper B (CU(B)). The BNC reduces molecular oxygen to 2 water molecules using 4 electrons from cytochrome c in the IMS and 4 protons from the mitochondrial matrix. In Theileria parva (East coast fever infection agent), this protein is Cytochrome c oxidase subunit 1 (MT-CO1).